The chain runs to 571 residues: WAP, Kazal, immunoglobulin, Kunitz and NTR domain-containing protein 2 (571 aa).

A signal peptide spans 1–29 (MCAPGYHRFWFHWGLLLLLLLEAPLRGLA). Positions 34–87 (RYSHAGICPNDMNPNLWVDAQSTCKRECETDQECETYEKCCPNVCGTKSCVAAR) constitute a WAP domain. Disulfide bonds link C41–C74, C57–C78, C61–C73, C67–C83, C129–C159, C133–C152, C141–C170, and C226–C282. Residues 121–172 (WDGQPVCKCKDRCEKEPSFTCASDGLTYYNRCFMDAEACSKGITLSVVTCRY) enclose the Kazal-like domain. An Ig-like C2-type domain is found at 205–298 (PALLNHPVHQ…GVLRADFPLS (94 aa)). The N-linked (GlcNAc...) asparagine glycan is linked to N314. 9 disulfide bridges follow: C323–C373, C332–C356, C348–C369, C381–C431, C390–C414, C406–C427, C440–C510, C443–C512, and C454–C561. 2 BPTI/Kunitz inhibitor domains span residues 323–373 (CLKP…MLAC) and 381–431 (CSLP…EESC). The NTR domain occupies 440-561 (CRACKPRQKL…LREVMYKKTC (122 aa)). N-linked (GlcNAc...) asparagine glycosylation occurs at N514.

Belongs to the WFIKKN family. In terms of assembly, interacts with both mature and propeptide myostatin/MSTN. As to expression, widely expressed, with high expression in skeletal muscle and heart. Also expressed in brain, lung and testis. Weakly expressed in liver and kidney.

The protein localises to the secreted. In terms of biological role, protease-inhibitor that contains multiple distinct protease inhibitor domains. Probably has serine protease- and metalloprotease-inhibitor activity. Inhibits the biological activity of mature myostatin, but not activin. The sequence is that of WAP, Kazal, immunoglobulin, Kunitz and NTR domain-containing protein 2 (Wfikkn2) from Mus musculus (Mouse).